The primary structure comprises 367 residues: Probable ATP-dependent RNA helicase MJ0669 (367 aa).

Residues 6-34 (MNFNELNLSDNILNAIRNKGFEKPTDIQM) carry the Q motif motif. A Helicase ATP-binding domain is found at 38 to 206 (PLFLNDEYNI…KKYMGDYSFI (169 aa)). An ATP-binding site is contributed by 51 to 58 (ARTGSGKT). Positions 154–157 (DEAD) match the DEAD box motif. The 155-residue stretch at 213–367 (NIEQSYVEVN…KLKIKKLKFG (155 aa)) folds into the Helicase C-terminal domain.

It belongs to the DEAD box helicase family. In terms of assembly, homodimer.

It catalyses the reaction ATP + H2O = ADP + phosphate + H(+). This chain is Probable ATP-dependent RNA helicase MJ0669, found in Methanocaldococcus jannaschii (strain ATCC 43067 / DSM 2661 / JAL-1 / JCM 10045 / NBRC 100440) (Methanococcus jannaschii).